Reading from the N-terminus, the 122-residue chain is Large ribosomal subunit protein uL14 (122 aa).

It belongs to the universal ribosomal protein uL14 family. In terms of assembly, part of the 50S ribosomal subunit. Forms a cluster with proteins L3 and L19. In the 70S ribosome, L14 and L19 interact and together make contacts with the 16S rRNA in bridges B5 and B8.

Binds to 23S rRNA. Forms part of two intersubunit bridges in the 70S ribosome. The polypeptide is Large ribosomal subunit protein uL14 (Agrobacterium fabrum (strain C58 / ATCC 33970) (Agrobacterium tumefaciens (strain C58))).